A 739-amino-acid polypeptide reads, in one-letter code: Oxysterol-binding protein-related protein 9 (739 aa).

The 98-residue stretch at 2–99 (ASIMEGPLSK…WIHALEETIL (98 aa)) folds into the PH domain. 2 disordered regions span residues 220–292 (TQAS…SYSS) and 306–371 (SSTS…ESVE). Positions 249 to 259 (NLGSRQSPTPI) are enriched in polar residues. Low complexity predominate over residues 260–276 (STGSGQSAPSSSLTSPS). Polar residues-rich tracts occupy residues 277-292 (HVNL…SYSS), 306-330 (SSTS…STGA), and 338-352 (TESL…TNEA).

The protein belongs to the OSBP family.

The catalysed reaction is a 1,2-diacyl-sn-glycero-3-phospho-(1D-myo-inositol 4-phosphate)(out) + a 1,2-diacyl-sn-glycero-3-phospho-L-serine(in) = a 1,2-diacyl-sn-glycero-3-phospho-(1D-myo-inositol 4-phosphate)(in) + a 1,2-diacyl-sn-glycero-3-phospho-L-serine(out). Functionally, interacts with OSBPL11 to function as lipid transfer proteins. Together they form a heterodimer that localizes at the ER-trans-Golgi membrane contact sites, and exchanges phosphatidylserine (1,2-diacyl-sn-glycero-3-phospho-L-serine, PS) for phosphatidylinositol-4-phosphate (1,2-diacyl-sn-glycero-3-phospho-(1D-myo-inositol 4-phosphate), PI(4)P) between the two organelles, a step that is critical for sphingomyelin synthesis in the Golgi complex. The sequence is that of Oxysterol-binding protein-related protein 9 (osbpl9) from Xenopus tropicalis (Western clawed frog).